The chain runs to 215 residues: HTH-type transcriptional repressor FabR (215 aa).

An HTH tetR-type domain is found at 10–70 (KTRRSLVEAA…TMVDESGLML (61 aa)). Residues 33-52 (SLREVAREAGIAPTSFYRHF) constitute a DNA-binding region (H-T-H motif).

Homodimer.

It is found in the cytoplasm. In terms of biological role, represses the transcription of fabB, involved in unsaturated fatty acid (UFA) biosynthesis. By controlling UFA production, FabR directly influences the physical properties of the membrane bilayer. The sequence is that of HTH-type transcriptional repressor FabR from Escherichia coli O1:K1 / APEC.